The primary structure comprises 552 residues: Cation transporter HKT1;1 (552 aa).

Residues methionine 1–serine 70 are Cytoplasmic-facing. 2 helical membrane passes run asparagine 71–leucine 91 and leucine 133–leucine 153. At tyrosine 154–arginine 221 the chain is on the cytoplasmic side. 2 helical membrane passes run isoleucine 222–phenylalanine 242 and valine 291–leucine 311. Topologically, residues arginine 312–serine 348 are cytoplasmic. The next 2 membrane-spanning stretches (helical) occupy residues valine 349 to phenylalanine 369 and isoleucine 402 to leucine 422. Residues proline 423 to arginine 448 lie on the Cytoplasmic side of the membrane. 2 consecutive transmembrane segments (helical) span residues alanine 449 to isoleucine 471 and glycine 524 to glycine 544. Topologically, residues arginine 545 to lysine 552 are cytoplasmic.

The protein belongs to the TrkH potassium transport family. HKT (TC 2.A.38.3) subfamily. As to expression, expressed in shoots. In roots, expressed in epidermis, exodermis, cortex, and sieve elements and companion cells of phloem. In mature leaves, expressed in large highly vacuolated cells of the adaxial epidermis, phloem and xylem.

The protein resides in the membrane. It carries out the reaction Na(+)(in) = Na(+)(out). Functions as a low-affinity sodium transporter. The polypeptide is Cation transporter HKT1;1 (Oryza sativa subsp. japonica (Rice)).